Here is a 91-residue protein sequence, read N- to C-terminus: MSEPDVKSHKIEFPCADYPIKVIGDTVVGFKDMVIEVLSKHAKVDLATLAERQSKEGKYTTVQLHIVAESENQLHDINSALRATGIVKMVL.

This sequence belongs to the UPF0250 family.

This Pseudomonas putida (strain W619) protein is UPF0250 protein PputW619_0619.